The sequence spans 56 residues: Photosystem II reaction center protein K (56 aa).

Positions Met1 to Cys19 are excised as a propeptide. The chain crosses the membrane as a helical span at residues Met35–Phe55.

It belongs to the PsbK family. As to quaternary structure, PSII is composed of 1 copy each of membrane proteins PsbA, PsbB, PsbC, PsbD, PsbE, PsbF, PsbH, PsbI, PsbJ, PsbK, PsbL, PsbM, PsbT, PsbX, PsbY, PsbZ, Psb30/Ycf12, at least 3 peripheral proteins of the oxygen-evolving complex and a large number of cofactors. It forms dimeric complexes.

The protein resides in the plastid. It is found in the chloroplast thylakoid membrane. Its function is as follows. One of the components of the core complex of photosystem II (PSII). PSII is a light-driven water:plastoquinone oxidoreductase that uses light energy to abstract electrons from H(2)O, generating O(2) and a proton gradient subsequently used for ATP formation. It consists of a core antenna complex that captures photons, and an electron transfer chain that converts photonic excitation into a charge separation. The chain is Photosystem II reaction center protein K from Welwitschia mirabilis (Tree tumbo).